Consider the following 181-residue polypeptide: MFKKFDEKENVSNCIQLKTSVIKGIKNQLIEQFPGIEPWLNQIMPKKDPVKIVRCHEHIEILTVNGELLFFRQREGPFYPTLRLLHKYPFILPHQQVDKGAIKFVLSGANIMCPGLTSPGAKLYPAAVDTIVAIMAEGKQHALCVGVMKMSAEDIEKVNKGIGIENIHYLNDGLWHMKTYK.

At Thr-81 the chain carries Phosphothreonine; by MAPK1 and MAPK3. The region spanning 92-171 is the PUA domain; that stretch reads LPHQQVDKGA…IGIENIHYLN (80 aa). Phosphoserine; by CDK1 is present on Ser-118.

The protein belongs to the MCTS1 family. In terms of assembly, interacts (via PUA domain) with DENR; the complex regulates translation reinitiation. Phosphorylation is critical for stabilization and promotion of cell proliferation. As to expression, ubiquitous. Over-expressed in T-cell lymphoid cell lines and in non-Hodgkin lymphoma cell lines as well as in a subset of primary large B-cell lymphomas.

The protein localises to the cytoplasm. Its function is as follows. Translation regulator forming a complex with DENR to promote translation reinitiation. Translation reinitiation is the process where the small ribosomal subunit remains attached to the mRNA following termination of translation of a regulatory upstream ORF (uORF), and resume scanning on the same mRNA molecule to initiate translation of a downstream ORF, usually the main ORF (mORF). The MCTS1/DENR complex is pivotal to two linked mechanisms essential for translation reinitiation. Firstly, the dissociation of deacylated tRNAs from post-termination 40S ribosomal complexes during ribosome recycling. Secondly, the recruitment in an EIF2-independent manner of aminoacylated initiator tRNA to P site of 40S ribosomes for a new round of translation. This regulatory mechanism governs the translation of more than 150 genes which translation reinitiation is MCTS1/DENR complex-dependent. Consequently, modulates various unrelated biological processes including cell cycle regulation and DNA damage signaling and repair. Notably, it positively regulates interferon gamma immunity to mycobacteria by enhancing the translation of JAK2. The chain is Malignant T-cell-amplified sequence 1 (MCTS1) from Homo sapiens (Human).